A 133-amino-acid polypeptide reads, in one-letter code: Putative pre-16S rRNA nuclease (133 aa).

Belongs to the YqgF nuclease family.

It is found in the cytoplasm. Could be a nuclease involved in processing of the 5'-end of pre-16S rRNA. The protein is Putative pre-16S rRNA nuclease of Alcanivorax borkumensis (strain ATCC 700651 / DSM 11573 / NCIMB 13689 / SK2).